Consider the following 369-residue polypeptide: UDP-N-acetylglucosamine--N-acetylmuramyl-(pentapeptide) pyrophosphoryl-undecaprenol N-acetylglucosamine transferase (369 aa).

UDP-N-acetyl-alpha-D-glucosamine-binding positions include 10–12, asparagine 124, arginine 161, serine 195, and glutamine 295; that span reads TAG.

The protein belongs to the glycosyltransferase 28 family. MurG subfamily.

It is found in the cell membrane. It carries out the reaction di-trans,octa-cis-undecaprenyl diphospho-N-acetyl-alpha-D-muramoyl-L-alanyl-D-glutamyl-meso-2,6-diaminopimeloyl-D-alanyl-D-alanine + UDP-N-acetyl-alpha-D-glucosamine = di-trans,octa-cis-undecaprenyl diphospho-[N-acetyl-alpha-D-glucosaminyl-(1-&gt;4)]-N-acetyl-alpha-D-muramoyl-L-alanyl-D-glutamyl-meso-2,6-diaminopimeloyl-D-alanyl-D-alanine + UDP + H(+). It participates in cell wall biogenesis; peptidoglycan biosynthesis. Functionally, cell wall formation. Catalyzes the transfer of a GlcNAc subunit on undecaprenyl-pyrophosphoryl-MurNAc-pentapeptide (lipid intermediate I) to form undecaprenyl-pyrophosphoryl-MurNAc-(pentapeptide)GlcNAc (lipid intermediate II). The chain is UDP-N-acetylglucosamine--N-acetylmuramyl-(pentapeptide) pyrophosphoryl-undecaprenol N-acetylglucosamine transferase from Acidothermus cellulolyticus (strain ATCC 43068 / DSM 8971 / 11B).